Reading from the N-terminus, the 377-residue chain is MTNLFENYGRLPFSLIKGEDQYLFDDRGNKYLDFTSGIGVMNLGYSFEKGKVAVKAQLDSLSHLSNLYQNPLQEDVAEKLSQNHSYKAFFCNSGTEANEAALKLTHLIKKDQKILAFTDGFHGRTFGAMSATMQEKIQAGFSPLLPNFVASPFNDVVALEQILEKEKIGAIIFEIIQGEGGVLPISPDFVEALKSCQQKGILLIIDEIQTGIGRTGKLFAFEHFDFEPDIFTLAKALANGIPTGAMLAKNKYASYFSAGKHGSTFGGNPLAMASANEVLKEIDSDFLEKVTDKGIFFLKLLTEKLSVKATVKSIRGLGLMIGIQLTDEKKVPEVLALLRENGLLALSAGHDVIRLLPPLVMTKVELQKGAELLEKIL.

Residues 94–95 (GT) and F121 contribute to the pyridoxal 5'-phosphate site. Residue R124 coordinates N(2)-acetyl-L-ornithine. 206-209 (DEIQ) contacts pyridoxal 5'-phosphate. K235 bears the N6-(pyridoxal phosphate)lysine mark. S263 lines the N(2)-acetyl-L-ornithine pocket. T264 contributes to the pyridoxal 5'-phosphate binding site.

Belongs to the class-III pyridoxal-phosphate-dependent aminotransferase family. ArgD subfamily. Homodimer. Pyridoxal 5'-phosphate serves as cofactor.

It localises to the cytoplasm. It catalyses the reaction N(2)-acetyl-L-ornithine + 2-oxoglutarate = N-acetyl-L-glutamate 5-semialdehyde + L-glutamate. The protein operates within amino-acid biosynthesis; L-arginine biosynthesis; N(2)-acetyl-L-ornithine from L-glutamate: step 4/4. In Lactococcus lactis subsp. lactis (strain IL1403) (Streptococcus lactis), this protein is Acetylornithine aminotransferase.